Consider the following 603-residue polypeptide: Membrane protein insertase YidC (603 aa).

Residues 7–27 (FFITIALSVLILAVWQYFYVL) form a helical membrane-spanning segment. The span at 38–51 (RVEQQRVEEQKKAA) shows a compositional bias: basic and acidic residues. A disordered region spans residues 38 to 76 (RVEQQRVEEQKKAAEAANPGAGTPAPAPGTIPNAPGGDT). A compositionally biased stretch (low complexity) spans 52-74 (EAANPGAGTPAPAPGTIPNAPGG). Transmembrane regions (helical) follow at residues 352–372 (FDLL…FWLI), 378–398 (FLGN…ALFF), 452–472 (WPVA…YITI), 497–517 (LFGL…WPLI), and 540–560 (IFTW…AGLV).

Belongs to the OXA1/ALB3/YidC family. Type 1 subfamily. As to quaternary structure, interacts with the Sec translocase complex via SecD. Specifically interacts with transmembrane segments of nascent integral membrane proteins during membrane integration.

It is found in the cell inner membrane. In terms of biological role, required for the insertion and/or proper folding and/or complex formation of integral membrane proteins into the membrane. Involved in integration of membrane proteins that insert both dependently and independently of the Sec translocase complex, as well as at least some lipoproteins. Aids folding of multispanning membrane proteins. In Mesorhizobium japonicum (strain LMG 29417 / CECT 9101 / MAFF 303099) (Mesorhizobium loti (strain MAFF 303099)), this protein is Membrane protein insertase YidC.